We begin with the raw amino-acid sequence, 415 residues long: uncharacterized protein (415 aa).

[4Fe-4S] cluster contacts are provided by cysteine 66, cysteine 72, cysteine 75, and cysteine 149. Glutamine 249, phenylalanine 276, glutamate 296, and aspartate 344 together coordinate S-adenosyl-L-methionine. Cysteine 370 functions as the Nucleophile in the catalytic mechanism.

This sequence belongs to the class I-like SAM-binding methyltransferase superfamily. RNA M5U methyltransferase family.

This is an uncharacterized protein from Brucella melitensis biotype 1 (strain ATCC 23456 / CCUG 17765 / NCTC 10094 / 16M).